The primary structure comprises 449 residues: Trigger factor (449 aa).

A PPIase FKBP-type domain is found at 174–261 (GDIAVVGFKG…LKDLKTRELP (88 aa)). The interval 430 to 449 (ENSTVTEKAPDKDKPSVTDA) is disordered. Residues 437 to 449 (KAPDKDKPSVTDA) show a composition bias toward basic and acidic residues.

Belongs to the FKBP-type PPIase family. Tig subfamily.

It is found in the cytoplasm. It carries out the reaction [protein]-peptidylproline (omega=180) = [protein]-peptidylproline (omega=0). In terms of biological role, involved in protein export. Acts as a chaperone by maintaining the newly synthesized protein in an open conformation. Functions as a peptidyl-prolyl cis-trans isomerase. The polypeptide is Trigger factor (Synechococcus sp. (strain CC9311)).